The chain runs to 159 residues: MNISIISVGKIKEKFLRAAIDEYSKRLSKYCKLNIIEVTDEKTPDNASLKEENIIREKEGSLILKHIKDNNFVIAIDLKGKSIASEEFSDLIENCRLTGNSTIAFVIGGSLGLSQQVLSRANYKLSFSKMTFPHQLFRVMLLEQVYRAFRILCGEPYHK.

Residues Ile76, Gly108, and 127–132 (FSKMTF) contribute to the S-adenosyl-L-methionine site.

It belongs to the RNA methyltransferase RlmH family. Homodimer.

The protein localises to the cytoplasm. It catalyses the reaction pseudouridine(1915) in 23S rRNA + S-adenosyl-L-methionine = N(3)-methylpseudouridine(1915) in 23S rRNA + S-adenosyl-L-homocysteine + H(+). Specifically methylates the pseudouridine at position 1915 (m3Psi1915) in 23S rRNA. The chain is Ribosomal RNA large subunit methyltransferase H from Clostridium botulinum (strain Loch Maree / Type A3).